The following is a 264-amino-acid chain: Small ribosomal subunit protein eS1 (264 aa).

Residues 236 to 255 are compositionally biased toward basic and acidic residues; the sequence is GEGGSGKRGEAGDKSERPEG. The disordered stretch occupies residues 236-264; it reads GEGGSGKRGEAGDKSERPEGYEPPVQESV.

It belongs to the eukaryotic ribosomal protein eS1 family. Component of the small ribosomal subunit. Mature ribosomes consist of a small (40S) and a large (60S) subunit. The 40S subunit contains about 33 different proteins and 1 molecule of RNA (18S). The 60S subunit contains about 49 different proteins and 3 molecules of RNA (28S, 5.8S and 5S).

It localises to the cytoplasm. In Spodoptera frugiperda (Fall armyworm), this protein is Small ribosomal subunit protein eS1.